The following is a 117-amino-acid chain: Large ribosomal subunit protein uL18 (117 aa).

The protein belongs to the universal ribosomal protein uL18 family. Part of the 50S ribosomal subunit; part of the 5S rRNA/L5/L18/L25 subcomplex. Contacts the 5S and 23S rRNAs.

In terms of biological role, this is one of the proteins that bind and probably mediate the attachment of the 5S RNA into the large ribosomal subunit, where it forms part of the central protuberance. The protein is Large ribosomal subunit protein uL18 of Alkalilimnicola ehrlichii (strain ATCC BAA-1101 / DSM 17681 / MLHE-1).